Consider the following 113-residue polypeptide: Colipase (113 aa).

Residues 1-18 form the signal peptide; sequence MEKVLVLLLVSLLAVAYA. Residues 19-23 constitute a propeptide, enterostatin, activation peptide; that stretch reads APGPR. 5 disulfide bridges follow: cysteine 35/cysteine 46, cysteine 41/cysteine 57, cysteine 45/cysteine 79, cysteine 67/cysteine 87, and cysteine 81/cysteine 105.

Belongs to the colipase family. Forms a 1:1 stoichiometric complex with pancreatic lipase. In terms of tissue distribution, expressed by the pancreas.

It is found in the secreted. Functionally, colipase is a cofactor of pancreatic lipase. It allows the lipase to anchor itself to the lipid-water interface. Without colipase the enzyme is washed off by bile salts, which have an inhibitory effect on the lipase. Its function is as follows. Enterostatin has a biological activity as a satiety signal. This is Colipase from Mus musculus (Mouse).